Consider the following 286-residue polypeptide: Aquaporin PIP1-1 (286 aa).

A disordered region spans residues Met1 to Pro34. Residues Met1–Gly54 are Cytoplasmic-facing. A helical transmembrane segment spans residues Ile55–Val75. Residues Val76–Gln88 lie on the Extracellular side of the membrane. Residues Gly89–Ser109 traverse the membrane as a helical segment. Over Gly110–Arg131 the chain is Cytoplasmic. The NPA 1 signature appears at Asn114–Ala116. The chain crosses the membrane as a helical span at residues Ala132–Gly152. Residues Tyr153–Lys174 are Extracellular-facing. Residues Gly175–Ala195 form a helical membrane-spanning segment. Topologically, residues Thr196–Pro208 are cytoplasmic. A helical membrane pass occupies residues Ile209–Ile229. At Thr230 to Trp256 the chain is on the extracellular side. The NPA 2 signature appears at Asn235–Ala237. The helical transmembrane segment at Ile257–Ile277 threads the bilayer. Topologically, residues Arg278 to Pro286 are cytoplasmic.

This sequence belongs to the MIP/aquaporin (TC 1.A.8) family. PIP (TC 1.A.8.11) subfamily. In terms of tissue distribution, expressed in leaves, roots, stems, flowers and fruits, with highest levels in roots.

It is found in the cell membrane. Functionally, water channel required to facilitate the transport of water across cell membrane; mercury-insensitive. Promotes primary root elongation and root hair formation. Contributes to the tolerance to multiple abiotic stresses including salt (NaCl), cold and water deprivation, by modulating cytosolic K(+)/Na(+) ratio, maintaining osmotic balance, and reducing membrane injury (e.g. oxidative injury). Also regulates the expression of abscisic acid (ABA)-responsive genes during dehydration and salt stresses. The polypeptide is Aquaporin PIP1-1 (Musa acuminata (Banana)).